The sequence spans 234 residues: Protein SSP120 (234 aa).

An N-terminal signal peptide occupies residues 1-22 (MRFLRGFVFSLAFTLYKVTATA). 2 consecutive EF-hand domains span residues 52–87 (LKDY…NREE) and 108–143 (MAKR…GNKF). Position 212 is a phosphothreonine (T212).

The sequence is that of Protein SSP120 (SSP120) from Saccharomyces cerevisiae (strain ATCC 204508 / S288c) (Baker's yeast).